We begin with the raw amino-acid sequence, 469 residues long: Dihydrolipoyl dehydrogenase (469 aa).

Residues 34–42 (EKQYWGGVC), Lys51, and Gly114 each bind FAD. The cysteines at positions 42 and 47 are disulfide-linked. NAD(+)-binding positions include 179 to 183 (GAGAI), Glu202, and 269 to 272 (SVGF). Asp312 and Ala320 together coordinate FAD. Catalysis depends on His448, which acts as the Proton acceptor.

Belongs to the class-I pyridine nucleotide-disulfide oxidoreductase family. In terms of assembly, homodimer. Part of an unusual ODH/PDH supercomplex, consisting of AceE (E1), AceF (E2), and Lpd (E3) together with OdhA (E1+E2). FAD serves as cofactor.

Its subcellular location is the cytoplasm. The enzyme catalyses N(6)-[(R)-dihydrolipoyl]-L-lysyl-[protein] + NAD(+) = N(6)-[(R)-lipoyl]-L-lysyl-[protein] + NADH + H(+). Its pathway is carbohydrate metabolism; tricarboxylic acid cycle; succinyl-CoA from 2-oxoglutarate (dehydrogenase route): step 1/1. Lipoamide dehydrogenase is an essential component of the pyruvate dehydrogenase (PDH) and 2-oxoglutarate dehydrogenase (ODH) complexes. Catalyzes the reoxidation of dihydrolipoyl groups which are covalently attached to the lipoate acyltransferase components (E2) of the complexes. Also catalyzes a reversible NADH:NAD(+) transhydrogenation, and is able to transfer electrons from NADH to various redox-active compounds and quinones. May be involved in quinone redox cycling in C.glutamicum. This is Dihydrolipoyl dehydrogenase (lpd) from Corynebacterium glutamicum (strain ATCC 13032 / DSM 20300 / JCM 1318 / BCRC 11384 / CCUG 27702 / LMG 3730 / NBRC 12168 / NCIMB 10025 / NRRL B-2784 / 534).